Consider the following 350-residue polypeptide: uncharacterized protein (350 aa).

Residues 1–27 (MKNKKRVLIASSLSCAILLLSAATTQA) form the signal peptide. Positions 28 to 71 (NSAHKDSQDQNKKEHVDKSQQKEKRNVTNKDKNSTVPDDIGKNG) are disordered. Over residues 30–60 (AHKDSQDQNKKEHVDKSQQKEKRNVTNKDKN) the composition is skewed to basic and acidic residues.

This sequence belongs to the aerolysin family.

This is an uncharacterized protein from Staphylococcus aureus (strain MSSA476).